The following is a 137-amino-acid chain: Small ribosomal subunit protein uS9 (137 aa).

A compositionally biased stretch (basic and acidic residues) spans 105–117 (LKIEGHLSRDPRA). The interval 105 to 137 (LKIEGHLSRDPRAKERRKYGLKKARKAPQFSKR) is disordered. Positions 118–137 (KERRKYGLKKARKAPQFSKR) are enriched in basic residues.

The protein belongs to the universal ribosomal protein uS9 family.

The sequence is that of Small ribosomal subunit protein uS9 from Prochlorococcus marinus (strain MIT 9211).